The following is a 291-amino-acid chain: uncharacterized protein (291 aa).

Solcar repeat units follow at residues 15–93 (PGPV…IKKS), 104–190 (PRTV…IKQS), and 201–287 (LSTV…VMEI). The next 6 membrane-spanning stretches (helical) occupy residues 21–41 (IIAG…AEFA), 70–90 (STVI…FDSI), 108–128 (LAGL…FESI), 169–189 (TVAR…SIKQ), 201–221 (LSTV…VYCT), and 259–280 (FWSG…VFTV).

It belongs to the mitochondrial carrier (TC 2.A.29) family.

It localises to the mitochondrion inner membrane. This is an uncharacterized protein from Schizosaccharomyces pombe (strain 972 / ATCC 24843) (Fission yeast).